Consider the following 470-residue polypeptide: Cell division protein FtsP (470 aa).

The segment at residues 1 to 27 (MSLSRRQFIQASGIALCAGAVPLKASA) is a signal peptide (tat-type signal). In terms of domain architecture, Plastocyanin-like spans 68-164 (WGINGRYLGP…NGLAGMWLVE (97 aa)).

It belongs to the FtsP family. Post-translationally, exported by the Tat system. The position of the signal peptide cleavage has been experimentally proven. Can also be exported by the Sec system.

The protein resides in the periplasm. Cell division protein that is required for growth during stress conditions. May be involved in protecting or stabilizing the divisomal assembly under conditions of stress. In Escherichia coli (strain K12), this protein is Cell division protein FtsP.